A 314-amino-acid chain; its full sequence is Mitochondrial 2-oxoglutarate/malate carrier protein (314 aa).

A2 is subject to N-acetylalanine. S6 carries the post-translational modification Phosphoserine. 3 Solcar repeats span residues 23–108 (VKFL…LFER), 117–208 (PGFL…SKQF), and 217–306 (DNIL…MNKA). The helical transmembrane segment at 24–42 (KFLFGGLAGMGATVFVQPL) threads the bilayer. An N6-succinyllysine modification is found at K57. K73 bears the N6-acetyllysine mark. Residues 83–101 (GLSAGLLRQATYTTTRLGI) traverse the membrane as a helical segment. Position 102 is a phosphotyrosine (Y102). Helical transmembrane passes span 119 to 140 (FLLK…GPPA), 183 to 202 (GCIP…LASY), and 222 to 240 (HFCA…SMPV). K256 is modified (N6-acetyllysine). The chain crosses the membrane as a helical span at residues 281-300 (GFTPYYARLGPHTVLTFIFL).

Belongs to the mitochondrial carrier (TC 2.A.29) family. In terms of assembly, interacts with SMIM26. As to expression, expressed in liver, heart and brain.

Its subcellular location is the mitochondrion inner membrane. It carries out the reaction (S)-malate(in) + 2-oxoglutarate(out) = (S)-malate(out) + 2-oxoglutarate(in). The enzyme catalyses malonate(in) + 2-oxoglutarate(out) = malonate(out) + 2-oxoglutarate(in). It catalyses the reaction succinate(in) + 2-oxoglutarate(out) = succinate(out) + 2-oxoglutarate(in). The catalysed reaction is maleate(in) + 2-oxoglutarate(out) = maleate(out) + 2-oxoglutarate(in). It carries out the reaction oxaloacetate(in) + 2-oxoglutarate(out) = oxaloacetate(out) + 2-oxoglutarate(in). In terms of biological role, catalyzes the transport of 2-oxoglutarate (alpha-oxoglutarate) across the inner mitochondrial membrane in an electroneutral exchange for malate. Can also exchange 2-oxoglutarate for other dicarboxylic acids such as malonate, succinate, maleate and oxaloacetate, although with lower affinity. Contributes to several metabolic processes, including the malate-aspartate shuttle, the oxoglutarate/isocitrate shuttle, in gluconeogenesis from lactate, and in nitrogen metabolism. Maintains mitochondrial fusion and fission events, and the organization and morphology of cristae. Involved in the regulation of apoptosis. Helps protect from cytotoxic-induced apoptosis by modulating glutathione levels in mitochondria. The sequence is that of Mitochondrial 2-oxoglutarate/malate carrier protein (Slc25a11) from Rattus norvegicus (Rat).